A 235-amino-acid polypeptide reads, in one-letter code: Claudin-16 (235 aa).

The Cytoplasmic segment spans residues 1 to 3 (MKD). A helical transmembrane segment spans residues 4 to 24 (LLQYAACFLAIFSTGFLIVAT). The Extracellular segment spans residues 25 to 79 (RTDCWMVNADDSLEVSTKCRGLWWECVTNAFDGIRTCDEYDSIYAEHPLKLVVTR). Residues 80–100 (ALMITADILAGFGFITLLLGL) form a helical membrane-spanning segment. The Cytoplasmic portion of the chain corresponds to 101–115 (DCVKFLPDEPHIKVR). Residues 116-136 (LCFVAGTVLLIAGTPGIIGSV) traverse the membrane as a helical segment. Over 137–169 (WYAVDVYVERSSLVLHNIFLGIQYKFGWSCWLG) the chain is Extracellular. The helical transmembrane segment at 170 to 190 (MAGSLGCFLAGALLTCCLYLF) threads the bilayer. Over 191 to 235 (KDVGPERNYPYAMRKPYSTAGVSMAKSYKAPRTETAKMYAVDTRV) the chain is Cytoplasmic. The short motif at 233–235 (TRV) is the Interaction with TJP1 element.

The protein belongs to the claudin family. In terms of assembly, can form heteropolymeric tight junction strands with other claudins. Interacts with CLDN19. Interacts (via PDZ-binding motif TRV) with TJP1 (via PDZ domain). Cannot form tight junction strands on its own.

Its subcellular location is the cell junction. It localises to the tight junction. It is found in the cell membrane. The catalysed reaction is Mg(2+)(in) = Mg(2+)(out). It catalyses the reaction Ca(2+)(in) = Ca(2+)(out). The enzyme catalyses Na(+)(in) = Na(+)(out). It carries out the reaction K(+)(in) = K(+)(out). The catalysed reaction is Rb(+)(in) = Rb(+)(out). It catalyses the reaction Cs(+)(in) = Cs(+)(out). The enzyme catalyses Li(+)(in) = Li(+)(out). Forms paracellular channels: coassembles with CLDN19 into tight junction strands with cation-selective channels through the strands, conveying epithelial permeability in a process known as paracellular tight junction permeability. Involved in the maintenance of ion gradients along the nephron. In the thick ascending limb (TAL) of Henle's loop, facilitates sodium paracellular permeability from the interstitial compartment to the lumen, contributing to the lumen-positive transepithelial potential that drives paracellular magnesium and calcium reabsorption. The chain is Claudin-16 from Rattus norvegicus (Rat).